Here is a 296-residue protein sequence, read N- to C-terminus: Glycine--tRNA ligase alpha subunit (296 aa).

Belongs to the class-II aminoacyl-tRNA synthetase family. Tetramer of two alpha and two beta subunits.

The protein localises to the cytoplasm. It carries out the reaction tRNA(Gly) + glycine + ATP = glycyl-tRNA(Gly) + AMP + diphosphate. The polypeptide is Glycine--tRNA ligase alpha subunit (Francisella tularensis subsp. novicida (strain U112)).